A 431-amino-acid chain; its full sequence is Tol-Pal system protein TolB (431 aa).

Residues 1–26 (MRLMTKLGFRALVASCLIAAGGAANA) form the signal peptide. A disordered region spans residues 411 to 431 (PQILSVQGGSVREPSWGPFMQ).

The protein belongs to the TolB family. In terms of assembly, the Tol-Pal system is composed of five core proteins: the inner membrane proteins TolA, TolQ and TolR, the periplasmic protein TolB and the outer membrane protein Pal. They form a network linking the inner and outer membranes and the peptidoglycan layer.

The protein resides in the periplasm. In terms of biological role, part of the Tol-Pal system, which plays a role in outer membrane invagination during cell division and is important for maintaining outer membrane integrity. The sequence is that of Tol-Pal system protein TolB from Burkholderia ambifaria (strain MC40-6).